Here is a 592-residue protein sequence, read N- to C-terminus: BTB/POZ domain-containing protein At5g03250 (592 aa).

In terms of domain architecture, BTB spans 28–98 (SDVTIEVGDM…CYGVKIELTA (71 aa)). In terms of domain architecture, NPH3 spans 217-502 (DWWFDDASFL…VQVLFFEQLR (286 aa)). Phosphotyrosine is present on Tyr-443.

This sequence belongs to the NPH3 family.

The protein operates within protein modification; protein ubiquitination. Its function is as follows. May act as a substrate-specific adapter of an E3 ubiquitin-protein ligase complex (CUL3-RBX1-BTB) which mediates the ubiquitination and subsequent proteasomal degradation of target proteins. This chain is BTB/POZ domain-containing protein At5g03250, found in Arabidopsis thaliana (Mouse-ear cress).